The primary structure comprises 119 residues: Putative membrane protein insertion efficiency factor (119 aa).

Belongs to the UPF0161 family.

The protein resides in the cell inner membrane. Functionally, could be involved in insertion of integral membrane proteins into the membrane. The polypeptide is Putative membrane protein insertion efficiency factor (Agrobacterium fabrum (strain C58 / ATCC 33970) (Agrobacterium tumefaciens (strain C58))).